The chain runs to 790 residues: Pre-mRNA-splicing factor cwf3 (790 aa).

HAT repeat units follow at residues 12-44 (DLIN…THEG), 45-77 (STLE…LRVA), 89-121 (EAFA…FLMK), 123-157 (PNVT…YAED), 159-190 (GGLF…KLGL), 193-228 (EAAR…LVVQ), 233-266 (TQNI…YYIR), 268-303 (GDYE…FEEQ), 331-364 (KILD…FLED), 368-402 (KVVQ…FYEN), 404-440 (DDLE…MELR), 457-492 (APRK…LEES), 494-526 (GTIE…LLEE), 528-562 (AYFE…KFVK), 567-601 (THME…FEEK), 639-673 (YGVL…METK), and 675-709 (GEID…FEIR). The interval 769 to 790 (LAGFVLSKSNPQETSKITGEEN) is disordered. Polar residues predominate over residues 775-790 (SKSNPQETSKITGEEN).

It belongs to the crooked-neck family. Belongs to the 40S cdc5-associated complex (or cwf complex), a spliceosome sub-complex reminiscent of a late-stage spliceosome composed of the U2, U5 and U6 snRNAs and at least brr2, cdc5, cwf2/prp3, cwf3/syf1, cwf4/syf3, cwf5/ecm2, spp42/cwf6, cwf7/spf27, cwf8, cwf9, cwf10, cwf11, cwf12, prp45/cwf13, cwf14, cwf15, cwf16, cwf17, cwf18, cwf19, cwf20, cwf21, cwf22, cwf23, cwf24, cwf25, cwf26, cyp7/cwf27, cwf28, cwf29/ist3, lea1, msl1, prp5/cwf1, prp10, prp12/sap130, prp17, prp22, sap61, sap62, sap114, sap145, slu7, smb1, smd1, smd3, smf1, smg1 and syf2.

Its subcellular location is the nucleus. Its function is as follows. Involved in pre-mRNA splicing and cell cycle progression. The sequence is that of Pre-mRNA-splicing factor cwf3 (cwf3) from Schizosaccharomyces pombe (strain 972 / ATCC 24843) (Fission yeast).